The chain runs to 652 residues: Acetyl-coenzyme A synthetase (652 aa).

CoA contacts are provided by residues 191–194 (RAGR), Thr-311, and Asn-335. ATP-binding positions include 387-389 (GEP), 411-416 (DTWWQT), Asp-500, and Arg-515. A CoA-binding site is contributed by Ser-523. Arg-526 provides a ligand contact to ATP. Val-537, His-539, and Ile-542 together coordinate Mg(2+). CoA is bound at residue Arg-584. Position 609 is an N6-acetyllysine (Lys-609).

This sequence belongs to the ATP-dependent AMP-binding enzyme family. Mg(2+) serves as cofactor. In terms of processing, acetylated. Deacetylation by the SIR2-homolog deacetylase activates the enzyme.

It carries out the reaction acetate + ATP + CoA = acetyl-CoA + AMP + diphosphate. Its function is as follows. Catalyzes the conversion of acetate into acetyl-CoA (AcCoA), an essential intermediate at the junction of anabolic and catabolic pathways. Acs undergoes a two-step reaction. In the first half reaction, Acs combines acetate with ATP to form acetyl-adenylate (AcAMP) intermediate. In the second half reaction, it can then transfer the acetyl group from AcAMP to the sulfhydryl group of CoA, forming the product AcCoA. In terms of biological role, enables the cell to use acetate during aerobic growth to generate energy via the TCA cycle, and biosynthetic compounds via the glyoxylate shunt. Acetylates CheY, the response regulator involved in flagellar movement and chemotaxis. This chain is Acetyl-coenzyme A synthetase, found in Yersinia pseudotuberculosis serotype I (strain IP32953).